The primary structure comprises 166 residues: MNAIYPGSFDPITFGHLDIIERGCRLFDQVYVAVLRNPNKQPMFSVQERLEQIAKAIAHLPNAQVDSFEGLTVNYARQRQAGAILRGLRVLSDFELELQMANTNKTLASDLETVFLTTSTEYSFLSSSLVKEVARFGGNVEHFVPSHVAAALYDQFHPVVERDRLT.

Position 8 (Ser-8) interacts with substrate. ATP-binding positions include 8–9 and His-16; that span reads SF. Residues Lys-40, Thr-72, and Arg-86 each coordinate substrate. Residues 87–89, Glu-97, and 122–128 each bind ATP; these read GLR and YSFLSSS.

The protein belongs to the bacterial CoaD family. As to quaternary structure, homohexamer. Mg(2+) is required as a cofactor.

The protein localises to the cytoplasm. The catalysed reaction is (R)-4'-phosphopantetheine + ATP + H(+) = 3'-dephospho-CoA + diphosphate. It participates in cofactor biosynthesis; coenzyme A biosynthesis; CoA from (R)-pantothenate: step 4/5. Its function is as follows. Reversibly transfers an adenylyl group from ATP to 4'-phosphopantetheine, yielding dephospho-CoA (dPCoA) and pyrophosphate. This is Phosphopantetheine adenylyltransferase from Synechococcus elongatus (strain ATCC 33912 / PCC 7942 / FACHB-805) (Anacystis nidulans R2).